The sequence spans 103 residues: Co-chaperonin GroES (103 aa).

The protein belongs to the GroES chaperonin family. As to quaternary structure, heptamer of 7 subunits arranged in a ring. Interacts with the chaperonin GroEL.

The protein localises to the cytoplasm. In terms of biological role, together with the chaperonin GroEL, plays an essential role in assisting protein folding. The GroEL-GroES system forms a nano-cage that allows encapsulation of the non-native substrate proteins and provides a physical environment optimized to promote and accelerate protein folding. GroES binds to the apical surface of the GroEL ring, thereby capping the opening of the GroEL channel. The polypeptide is Co-chaperonin GroES (Prochlorococcus marinus (strain MIT 9215)).